The chain runs to 217 residues: tRNA (guanine-N(7)-)-methyltransferase (217 aa).

Residues Glu44, Asp69, Asp96, and Asp118 each contribute to the S-adenosyl-L-methionine site. Asp118 is a catalytic residue. Substrate is bound at residue Lys122. The segment at Arg124–Arg129 is interaction with RNA. Substrate contacts are provided by residues Asp154 and Thr193–Glu196.

It belongs to the class I-like SAM-binding methyltransferase superfamily. TrmB family.

It carries out the reaction guanosine(46) in tRNA + S-adenosyl-L-methionine = N(7)-methylguanosine(46) in tRNA + S-adenosyl-L-homocysteine. It participates in tRNA modification; N(7)-methylguanine-tRNA biosynthesis. In terms of biological role, catalyzes the formation of N(7)-methylguanine at position 46 (m7G46) in tRNA. The polypeptide is tRNA (guanine-N(7)-)-methyltransferase (Lactococcus lactis subsp. lactis (strain IL1403) (Streptococcus lactis)).